The chain runs to 638 residues: Influenza virus NS1A-binding protein homolog (638 aa).

A BTB domain is found at C32–T99. The region spanning G134 to D233 is the BACK domain. The disordered stretch occupies residues I251–S273. Kelch repeat units lie at residues K365–D411, H412–G459, L461–N508, K509–G555, L557–N602, and I604–S638.

It localises to the cytoplasm. Its subcellular location is the cytoskeleton. The protein resides in the nucleus. Functionally, plays a role in cell division and in the dynamic organization of the actin skeleton as a stabilizer of actin filaments by association with F-actin through Kelch repeats. This Xenopus laevis (African clawed frog) protein is Influenza virus NS1A-binding protein homolog (ivns1abp).